Consider the following 335-residue polypeptide: MSGYPPSSQGYGYGGNPPPPQPPYGSTGNNPPPYGSSGSNPPPPYGSSASSPYAVPYGAQPAPYGAPPSAPYASLPGDHNKPHKEKPHGASYGSPSPGGYGAHPSSGPSDYGGYGGAPQQSGHGGGYGGAPQQSGHGGGYGAPPPQASYGSPFASLVPSAFPPGTDPNIVACFQAADRDNSGFIDDKELQGALSSYNQSFSIRTVHLLMYLFTNSNVRKIGPKEFTSLFFSLQNWRSIFERFDKDRSGRIDTNELRDALMSLGFSVSPVILDLLVSKFDKSGGRNRAIEYDNFIECCLTVKGLTEKFKEKDTALSGSAIFNYENFMLTVLPFLVA.

The span at 1 to 10 (MSGYPPSSQG) shows a compositional bias: low complexity. Residues 1 to 154 (MSGYPPSSQG…PQASYGSPFA (154 aa)) are disordered. Pro residues predominate over residues 30 to 45 (NPPPYGSSGSNPPPPY). The span at 46-63 (GSSASSPYAVPYGAQPAP) shows a compositional bias: low complexity. Positions 110 to 141 (DYGGYGGAPQQSGHGGGYGGAPQQSGHGGGYG) are enriched in gly residues. 2 consecutive EF-hand domains span residues 164–199 (GTDP…YNQS) and 230–265 (FSLQ…LGFS). Ca(2+) contacts are provided by Asp-177, Asp-179, Ser-181, Glu-188, Asp-243, Asp-245, Ser-247, Arg-249, and Glu-254.

Potential calcium sensor. The polypeptide is Probable calcium-binding protein CML49 (CML49) (Arabidopsis thaliana (Mouse-ear cress)).